Reading from the N-terminus, the 245-residue chain is Isopentenyl phosphate kinase (245 aa).

5-9 is a binding site for ATP; the sequence is KIGGS. Gly45 lines the substrate pocket. Residue Gly46 participates in ATP binding. Substrate-binding residues include His50 and Gly143. ATP contacts are provided by residues Asp164, 169–174, Gly201, and Lys205; that span reads YSKDPK.

The protein belongs to the isopentenyl phosphate kinase family. In terms of assembly, homodimer.

The catalysed reaction is isopentenyl phosphate + ATP = isopentenyl diphosphate + ADP. Functionally, catalyzes the formation of isopentenyl diphosphate (IPP), the building block of all isoprenoids. Has lower activity with isopentenyl thiolophosphate (ISP). Has low activity with dimethylallyl phosphate (DMAP), 1-butyl phosphate (BP) and 3-buten-1-yl phosphate (BEP). Has no significant activity with geranyl phosphate (in vitro). The protein is Isopentenyl phosphate kinase of Thermoplasma acidophilum (strain ATCC 25905 / DSM 1728 / JCM 9062 / NBRC 15155 / AMRC-C165).